Consider the following 1423-residue polypeptide: Serum albumin SDS-1 (1423 aa).

The N-terminal stretch at 1–23 is a signal peptide; sequence MGKAMLKLCITLMVLVFSGTAES. Residues 24 to 29 constitute a propeptide that is removed on maturation; sequence KGVMRR. Albumin domains follow at residues 29–230, 231–426, 427–608, 609–811, 812–1031, 1032–1226, and 1227–1422; these read REDE…EDFK, HKLT…EFKS, EVEK…SDFK, MDVE…SQAR, QEAL…HTIH, MEIR…AIEK, and VIKD…AIKS. H36 is a Cu cation binding site. Cystine bridges form between C42/C88, C87/C96, C109/C125, C124/C135, C167/C212, C211/C221, C244/C290, C289/C298, C311/C327, C326/C337, C363/C408, C407/C416, C439/C485, C484/C493, C506/C522, and C521/C532. N490 carries an N-linked (GlcNAc...) asparagine glycan. The N-linked (GlcNAc...) asparagine glycan is linked to N541. Cystine bridges form between C556–C601, C622–C668, C667–C676, C689–C705, C704–C715, C747–C792, C791–C802, C825–C871, C870–C879, C892–C907, and C906–C947. N652 carries N-linked (GlcNAc...) asparagine glycosylation. N754 carries an N-linked (GlcNAc...) asparagine glycan. 2 N-linked (GlcNAc...) asparagine glycosylation sites follow: N908 and N911. The tract at residues 910–936 is disordered; it reads SNTSTTTSTTTSTTTSTTTSTTTSTTS. 7 consecutive repeat copies span residues 913–916, 917–920, 921–924, 925–928, 929–932, 933–935, and 936–939. Residues 913 to 939 are 7 X 4 AA tandem repeats of S-T-T-T; sequence STTTSTTTSTTTSTTTSTTTSTTSTTT. N954 carries N-linked (GlcNAc...) asparagine glycosylation. Intrachain disulfides connect C969–C1014, C1013–C1022, C1045–C1091, C1090–C1099, C1112–C1128, C1127–C1138, C1163–C1208, and C1207–C1216. N1070 carries an N-linked (GlcNAc...) asparagine glycan. N-linked (GlcNAc...) asparagine glycosylation is present at N1236. Cystine bridges form between C1239–C1285, C1284–C1291, C1304–C1320, C1319–C1330, C1359–C1404, and C1403–C1412.

The protein belongs to the ALB/AFP/VDB family. Plasma.

Its subcellular location is the secreted. Serum albumin, the main protein of plasma, has a good binding capacity for water, Ca(2+), Na(+), K(+), fatty acids, hormones, bilirubin and drugs. Its main function is the regulation of the colloidal osmotic pressure of blood. The chain is Serum albumin SDS-1 (SDS-1) from Petromyzon marinus (Sea lamprey).